Consider the following 204-residue polypeptide: ATP-dependent Clp protease proteolytic subunit (204 aa).

Catalysis depends on Ser-101, which acts as the Nucleophile. His-126 is an active-site residue.

This sequence belongs to the peptidase S14 family. In terms of assembly, fourteen ClpP subunits assemble into 2 heptameric rings which stack back to back to give a disk-like structure with a central cavity, resembling the structure of eukaryotic proteasomes.

The protein resides in the cytoplasm. It catalyses the reaction Hydrolysis of proteins to small peptides in the presence of ATP and magnesium. alpha-casein is the usual test substrate. In the absence of ATP, only oligopeptides shorter than five residues are hydrolyzed (such as succinyl-Leu-Tyr-|-NHMec, and Leu-Tyr-Leu-|-Tyr-Trp, in which cleavage of the -Tyr-|-Leu- and -Tyr-|-Trp bonds also occurs).. Cleaves peptides in various proteins in a process that requires ATP hydrolysis. Has a chymotrypsin-like activity. Plays a major role in the degradation of misfolded proteins. The polypeptide is ATP-dependent Clp protease proteolytic subunit (Deinococcus radiodurans (strain ATCC 13939 / DSM 20539 / JCM 16871 / CCUG 27074 / LMG 4051 / NBRC 15346 / NCIMB 9279 / VKM B-1422 / R1)).